Consider the following 433-residue polypeptide: Tol-Pal system protein TolB (433 aa).

The first 21 residues, 1-21 (MINLFRGLLVVLCFASAMVAA), serve as a signal peptide directing secretion.

The protein belongs to the TolB family. In terms of assembly, the Tol-Pal system is composed of five core proteins: the inner membrane proteins TolA, TolQ and TolR, the periplasmic protein TolB and the outer membrane protein Pal. They form a network linking the inner and outer membranes and the peptidoglycan layer.

Its subcellular location is the periplasm. Functionally, part of the Tol-Pal system, which plays a role in outer membrane invagination during cell division and is important for maintaining outer membrane integrity. This chain is Tol-Pal system protein TolB, found in Pseudomonas syringae pv. tomato (strain ATCC BAA-871 / DC3000).